We begin with the raw amino-acid sequence, 57 residues long: Large ribosomal subunit protein bL32 (57 aa).

It belongs to the bacterial ribosomal protein bL32 family.

The polypeptide is Large ribosomal subunit protein bL32 (Staphylococcus haemolyticus (strain JCSC1435)).